A 485-amino-acid chain; its full sequence is MFS-type transporter phm3 (485 aa).

Residues M1–T22 form a disordered region. Transmembrane regions (helical) follow at residues F55 to A75, I83 to L103, L113 to S133, F144 to L164, A175 to V195, W203 to M223, P278 to F298, G317 to L337, L357 to S377, W384 to P404, A421 to P441, and L449 to V469.

The protein belongs to the major facilitator superfamily.

It localises to the cell membrane. Functionally, MFS-type transporter; part of the gene cluster that mediates the biosynthesis of the trans-fused decalin-containing tetramic acid phomasetin. The chain is MFS-type transporter phm3 from Pyrenochaetopsis sp.